The sequence spans 289 residues: Acetyl-coenzyme A carboxylase carboxyl transferase subunit beta (289 aa).

The CoA carboxyltransferase N-terminal domain maps to 28–289 (VMTKCPECKK…QGGGMAVWQS (262 aa)). Zn(2+) is bound by residues C32, C35, C51, and C54. Residues 32–54 (CPECKKIMYTKELLKNLKVCVNC) form a C4-type zinc finger.

Belongs to the AccD/PCCB family. As to quaternary structure, acetyl-CoA carboxylase is a heterohexamer composed of biotin carboxyl carrier protein (AccB), biotin carboxylase (AccC) and two subunits each of ACCase subunit alpha (AccA) and ACCase subunit beta (AccD). Zn(2+) is required as a cofactor.

It localises to the cytoplasm. The enzyme catalyses N(6)-carboxybiotinyl-L-lysyl-[protein] + acetyl-CoA = N(6)-biotinyl-L-lysyl-[protein] + malonyl-CoA. The protein operates within lipid metabolism; malonyl-CoA biosynthesis; malonyl-CoA from acetyl-CoA: step 1/1. In terms of biological role, component of the acetyl coenzyme A carboxylase (ACC) complex. Biotin carboxylase (BC) catalyzes the carboxylation of biotin on its carrier protein (BCCP) and then the CO(2) group is transferred by the transcarboxylase to acetyl-CoA to form malonyl-CoA. The chain is Acetyl-coenzyme A carboxylase carboxyl transferase subunit beta from Bacillus cereus (strain G9842).